The following is a 259-amino-acid chain: Imidazole glycerol phosphate synthase subunit HisF (259 aa).

Active-site residues include D11 and D130.

Belongs to the HisA/HisF family. In terms of assembly, heterodimer of HisH and HisF.

Its subcellular location is the cytoplasm. The catalysed reaction is 5-[(5-phospho-1-deoxy-D-ribulos-1-ylimino)methylamino]-1-(5-phospho-beta-D-ribosyl)imidazole-4-carboxamide + L-glutamine = D-erythro-1-(imidazol-4-yl)glycerol 3-phosphate + 5-amino-1-(5-phospho-beta-D-ribosyl)imidazole-4-carboxamide + L-glutamate + H(+). It functions in the pathway amino-acid biosynthesis; L-histidine biosynthesis; L-histidine from 5-phospho-alpha-D-ribose 1-diphosphate: step 5/9. In terms of biological role, IGPS catalyzes the conversion of PRFAR and glutamine to IGP, AICAR and glutamate. The HisF subunit catalyzes the cyclization activity that produces IGP and AICAR from PRFAR using the ammonia provided by the HisH subunit. The protein is Imidazole glycerol phosphate synthase subunit HisF of Lactococcus lactis subsp. cremoris (strain MG1363).